The chain runs to 73 residues: Large ribosomal subunit protein bL31c (73 aa).

The protein belongs to the bacterial ribosomal protein bL31 family. Type A subfamily. In terms of assembly, part of the 50S ribosomal subunit.

The protein localises to the plastid. The protein resides in the chloroplast. Binds the 23S rRNA. The sequence is that of Large ribosomal subunit protein bL31c from Palmaria palmata (Dulse).